The chain runs to 165 residues: Glutamyl-tRNA(Gln) amidotransferase subunit F, mitochondrial (165 aa).

Residues 1-19 constitute a mitochondrion transit peptide; that stretch reads MKSILRSTTRNLITSSRRF.

The protein belongs to the GatF family. In terms of assembly, subunit of the heterotrimeric GatFAB amidotransferase (AdT) complex, composed of A, B and F subunits.

It is found in the mitochondrion inner membrane. The enzyme catalyses L-glutamyl-tRNA(Gln) + L-glutamine + ATP + H2O = L-glutaminyl-tRNA(Gln) + L-glutamate + ADP + phosphate + H(+). In terms of biological role, allows the formation of correctly charged Gln-tRNA(Gln) through the transamidation of misacylated Glu-tRNA(Gln) in the mitochondria. The reaction takes place in the presence of glutamine and ATP through an activated gamma-phospho-Glu-tRNA(Gln). Required for proper protein synthesis within the mitochondrion. The sequence is that of Glutamyl-tRNA(Gln) amidotransferase subunit F, mitochondrial from Candida albicans (strain WO-1) (Yeast).